The following is a 629-amino-acid chain: Transferrin (629 aa).

The first 21 residues, 1–21, serve as a signal peptide directing secretion; sequence MTIKNVLKLAALLGVLALVQA. 2 Transferrin-like domains span residues 26-366 and 372-621; these read YRMC…ERDG and MKMC…GLKC. 2 cysteine pairs are disulfide-bonded: Cys-29–Cys-63 and Cys-38–Cys-54. A Fe(3+)-binding site is contributed by Tyr-111. 6 disulfides stabilise this stretch: Cys-135/Cys-231, Cys-184/Cys-210, Cys-207/Cys-216, Cys-270/Cys-283, Cys-375/Cys-409, and Cys-385/Cys-403. Residues Thr-137, Arg-141, Val-143, and Gly-144 each coordinate hydrogencarbonate. Tyr-225 contributes to the Fe(3+) binding site. Fe(3+) contacts are provided by Asp-408 and His-561.

The protein belongs to the transferrin family. In terms of assembly, monomer.

Functionally, transferrins are iron binding transport proteins which bind Fe(3+) ion in association with the binding of an anion, usually bicarbonate. This transferrin binds only one Fe(3+) ion per protein molecule. Transports iron ions from the hemolymph into the eggs during the vitellogenic stage (oogenesis). The protein is Transferrin of Sarcophaga peregrina (Flesh fly).